The following is a 309-amino-acid chain: Homoserine kinase (309 aa).

Pro-91–Cys-101 contacts ATP.

The protein belongs to the GHMP kinase family. Homoserine kinase subfamily.

The protein resides in the cytoplasm. It carries out the reaction L-homoserine + ATP = O-phospho-L-homoserine + ADP + H(+). It functions in the pathway amino-acid biosynthesis; L-threonine biosynthesis; L-threonine from L-aspartate: step 4/5. Functionally, catalyzes the ATP-dependent phosphorylation of L-homoserine to L-homoserine phosphate. In Buchnera aphidicola subsp. Acyrthosiphon pisum (strain 5A), this protein is Homoserine kinase.